The primary structure comprises 338 residues: 1-aminocyclopropane-1-carboxylate deaminase (338 aa).

K51 is subject to N6-(pyridoxal phosphate)lysine. S78 serves as the catalytic Nucleophile.

It belongs to the ACC deaminase/D-cysteine desulfhydrase family. Homotrimer. Pyridoxal 5'-phosphate serves as cofactor.

The enzyme catalyses 1-aminocyclopropane-1-carboxylate + H2O = 2-oxobutanoate + NH4(+). Its function is as follows. Catalyzes a cyclopropane ring-opening reaction, the irreversible conversion of 1-aminocyclopropane-1-carboxylate (ACC) to ammonia and alpha-ketobutyrate. Allows growth on ACC as a nitrogen source. The chain is 1-aminocyclopropane-1-carboxylate deaminase from Burkholderia pseudomallei (strain 1710b).